Reading from the N-terminus, the 487-residue chain is Glutamate--tRNA ligase (487 aa).

The 'HIGH' region signature appears at 10-20 (PSPTGYMHVGN). The 'KMSKS' region signature appears at 251-255 (KLSKR). ATP is bound at residue lysine 254.

This sequence belongs to the class-I aminoacyl-tRNA synthetase family. Glutamate--tRNA ligase type 1 subfamily. In terms of assembly, monomer.

It localises to the cytoplasm. The enzyme catalyses tRNA(Glu) + L-glutamate + ATP = L-glutamyl-tRNA(Glu) + AMP + diphosphate. Catalyzes the attachment of glutamate to tRNA(Glu) in a two-step reaction: glutamate is first activated by ATP to form Glu-AMP and then transferred to the acceptor end of tRNA(Glu). The chain is Glutamate--tRNA ligase from Clostridium kluyveri (strain ATCC 8527 / DSM 555 / NBRC 12016 / NCIMB 10680 / K1).